The chain runs to 132 residues: Sodium/calcium exchanger regulatory protein 1 (132 aa).

Residues arginine 126 and tyrosine 128 each contribute to the (9Z)-hexadecenoate site.

The protein belongs to the calycin superfamily. Fatty-acid binding protein (FABP) family. Interacts with Na(+)/Ca(2+) exchanger NCXSQ1; ReP1-NCXSQ phosphorylation does not affect the interaction. In terms of processing, phosphorylated. Phosphorylation may result in the release of the bound fatty acid. Expressed in the optic nerve (at protein level).

The protein resides in the cytoplasm. It is found in the membrane. Binds and may transport fatty acids such as palmitoleate. Also binds poly-phosphoinositides including phosphatidylinositol 4-phosphate (PtdIns(4)P), phosphatidylinositol 4,5-bisphosphate (PtdIns(4,5)P2) and phosphatidylinositol 3,4,5-trisphosphate (PtdIns(3,4,5)P3), and phosphatidic acid. When phosphorylated, stimulates the activity of optic nerve Na(+)/Ca(2+) exchanger. This Doryteuthis pealeii (Longfin inshore squid) protein is Sodium/calcium exchanger regulatory protein 1.